Here is a 661-residue protein sequence, read N- to C-terminus: Fusaric acid cluster transcription factor FUB12 (661 aa).

The segment at residues 17–48 (CVPCRTRKIKCNAAVVGLPCGSCVSRECPDDC) is a DNA-binding region (zn(2)-C6 fungal-type). 2 disordered regions span residues 57-131 (TVKV…RPPG) and 151-184 (SAAQ…PQLD). Residues 73 to 98 (PDTNGSVLSPRQQQLPTNVSRQTTDS) are compositionally biased toward polar residues. The span at 99–109 (SHSDPVEESIH) shows a compositional bias: basic and acidic residues. The span at 110–119 (ASHTGSSLRN) shows a compositional bias: polar residues. Positions 120 to 129 (DTPHSRDRRP) are enriched in basic and acidic residues.

The protein localises to the nucleus. Efflux pump involved in export of biosynthesis of fusaric acid, a mycotoxin with low to moderate toxicity to animals and humans, but with high phytotoxic properties. Constitutes a self-protecting mechanism of the fungus against critical levels of FSA within the cell. This is Fusaric acid cluster transcription factor FUB12 from Fusarium oxysporum f. sp. lycopersici (strain 4287 / CBS 123668 / FGSC 9935 / NRRL 34936) (Fusarium vascular wilt of tomato).